Reading from the N-terminus, the 461-residue chain is tRNA modification GTPase MnmE (461 aa).

Residues Arg-23, Glu-84, and Lys-123 each contribute to the (6S)-5-formyl-5,6,7,8-tetrahydrofolate site. The 164-residue stretch at 219 to 382 (GVQVVIGGRP…LLDHLTDTVA (164 aa)) folds into the TrmE-type G domain. GTP-binding positions include 229–234 (NAGKST), 248–254 (SETPGTT), 273–276 (DTAG), and 337–340 (NKAD). The Mg(2+) site is built by Ser-233 and Thr-254. Lys-461 contacts (6S)-5-formyl-5,6,7,8-tetrahydrofolate.

This sequence belongs to the TRAFAC class TrmE-Era-EngA-EngB-Septin-like GTPase superfamily. TrmE GTPase family. As to quaternary structure, homodimer. Heterotetramer of two MnmE and two MnmG subunits. It depends on K(+) as a cofactor.

The protein resides in the cytoplasm. In terms of biological role, exhibits a very high intrinsic GTPase hydrolysis rate. Involved in the addition of a carboxymethylaminomethyl (cmnm) group at the wobble position (U34) of certain tRNAs, forming tRNA-cmnm(5)s(2)U34. The chain is tRNA modification GTPase MnmE from Salinibacter ruber (strain DSM 13855 / M31).